Reading from the N-terminus, the 102-residue chain is NADH-quinone oxidoreductase subunit K (102 aa).

3 helical membrane passes run 5-25 (LSHF…GIIL), 30-50 (IIVV…NLVS), and 62-82 (VFSL…LAIL).

This sequence belongs to the complex I subunit 4L family. In terms of assembly, NDH-1 is composed of 14 different subunits. Subunits NuoA, H, J, K, L, M, N constitute the membrane sector of the complex.

It localises to the cell inner membrane. It carries out the reaction a quinone + NADH + 5 H(+)(in) = a quinol + NAD(+) + 4 H(+)(out). In terms of biological role, NDH-1 shuttles electrons from NADH, via FMN and iron-sulfur (Fe-S) centers, to quinones in the respiratory chain. The immediate electron acceptor for the enzyme in this species is believed to be ubiquinone. Couples the redox reaction to proton translocation (for every two electrons transferred, four hydrogen ions are translocated across the cytoplasmic membrane), and thus conserves the redox energy in a proton gradient. The chain is NADH-quinone oxidoreductase subunit K from Methylocella silvestris (strain DSM 15510 / CIP 108128 / LMG 27833 / NCIMB 13906 / BL2).